Here is a 431-residue protein sequence, read N- to C-terminus: Adenylosuccinate synthetase (431 aa).

Residues 12 to 18 (GDEGKGK) and 40 to 42 (GHT) contribute to the GTP site. Residue Asp-13 is the Proton acceptor of the active site. Positions 13 and 40 each coordinate Mg(2+). IMP contacts are provided by residues 13–16 (DEGK), 38–41 (NAGH), Thr-131, Arg-145, Gln-225, Thr-240, and Arg-304. The active-site Proton donor is the His-41. 300-306 (VNTGRPR) is a substrate binding site. GTP is bound by residues Arg-306, 332-334 (KLD), and 414-416 (STS).

It belongs to the adenylosuccinate synthetase family. As to quaternary structure, homodimer. Requires Mg(2+) as cofactor.

It is found in the cytoplasm. The enzyme catalyses IMP + L-aspartate + GTP = N(6)-(1,2-dicarboxyethyl)-AMP + GDP + phosphate + 2 H(+). The protein operates within purine metabolism; AMP biosynthesis via de novo pathway; AMP from IMP: step 1/2. Functionally, plays an important role in the de novo pathway of purine nucleotide biosynthesis. Catalyzes the first committed step in the biosynthesis of AMP from IMP. The sequence is that of Adenylosuccinate synthetase from Rhizobium rhizogenes (strain K84 / ATCC BAA-868) (Agrobacterium radiobacter).